The primary structure comprises 127 residues: MORF4 family-associated protein 1 (127 aa).

A coiled-coil region spans residues 92 to 126; it reads RAAKRCEKAEEKAKEIAKMAEMLVELVRRIEKSES.

The protein belongs to the MORF4 family-associated protein family. Found in a complex composed of MORF4L1, MRFAP1 and RB1. Interacts via its N-terminus with MORF4L1. Interacts with CSTB and MORF4L2.

Its subcellular location is the nucleus. It localises to the cytoplasm. It is found in the perinuclear region. In Homo sapiens (Human), this protein is MORF4 family-associated protein 1.